A 335-amino-acid polypeptide reads, in one-letter code: MNKPMLMLITFATSLLAQTNKASTGLKTDQSFNNSLSESVKLKEIADIYPTNTNFLTGIGIVAGLAGKGDSIKQKDLIIKILEENNIINEIGSNNIESKNIALVNVSLQVKGNTIKGSKHKACVASILDSKDLTNGILLKTNLKNKEGEIIAIASGITQPNNKLKGSGYTIDSVIINENQNINHSYNIILKKGNYTLINRIHKILTSKKINNKIKSDSTIEIEAKNISLLEEIENIKIETNPKILIDKKNGIILASENAKIGTFTFSIEKDNQNIFLSKNNKTTIQVNSMKLNEFILKNSNNLSNKELIQIIQAAQKINKLNGELILEEIDGNQN.

Residues 1 to 17 (MNKPMLMLITFATSLLA) form the signal peptide.

This sequence belongs to the FlgI family. As to quaternary structure, the basal body constitutes a major portion of the flagellar organelle and consists of four rings (L,P,S, and M) mounted on a central rod.

It is found in the periplasm. Its subcellular location is the bacterial flagellum basal body. In terms of biological role, assembles around the rod to form the L-ring and probably protects the motor/basal body from shearing forces during rotation. This Borreliella burgdorferi (strain ZS7) (Borrelia burgdorferi) protein is Flagellar P-ring protein.